We begin with the raw amino-acid sequence, 517 residues long: Putative succinate-semialdehyde dehydrogenase [NADP(+)] (517 aa).

NADP(+) is bound by residues 157 to 158 (WN), 181 to 184 (KPDS), and 232 to 233 (GS). Glutamate 254 serves as the catalytic Proton acceptor. Leucine 255 contributes to the NADP(+) binding site. The active-site Nucleophile is cysteine 288. Glutamate 386 contacts NADP(+).

It belongs to the aldehyde dehydrogenase family.

It catalyses the reaction succinate semialdehyde + NADP(+) + H2O = succinate + NADPH + 2 H(+). Catalyzes the NADP(+)-dependent oxidation of succinate semialdehyde to succinate. Although it has succinate semialdehyde dehydrogenase activity, is likely to act physiologically on a different aldehyde(s). This Mycolicibacterium smegmatis (strain ATCC 700084 / mc(2)155) (Mycobacterium smegmatis) protein is Putative succinate-semialdehyde dehydrogenase [NADP(+)] (gabD2).